The following is a 144-amino-acid chain: Protection of telomeres protein 1c (144 aa).

The protein belongs to the telombin family. In terms of tissue distribution, expressed at extremely low levels at the limit of detection.

The protein localises to the nucleus. It localises to the chromosome. The protein resides in the telomere. Functionally, binds specifically single-stranded telomeric DNA with weak affinity. Has probably no function in the regulation of telomere length. The protein is Protection of telomeres protein 1c of Arabidopsis thaliana (Mouse-ear cress).